Consider the following 157-residue polypeptide: MKCPYCSSPDSRVINSRPSDDGASIRRRRECLTCTRRFTTYERAQLEPLMVVKRSGVREAFNPDKLLRGLALASEKRPVEEAALRTFAYSFEDEVQGGEIPTEEIGRRAMTFLRPLDDVAYIRFASVYRDFDSLERFIEEIRGLKGHEDEAPKSDPA.

Residues methionine 1–glycine 22 are disordered. A zinc finger lies at cysteine 3–cysteine 34. The segment covering serine 8–arginine 17 has biased composition (polar residues). Residues leucine 49–arginine 136 enclose the ATP-cone domain.

The protein belongs to the NrdR family. Zn(2+) is required as a cofactor.

Negatively regulates transcription of bacterial ribonucleotide reductase nrd genes and operons by binding to NrdR-boxes. The sequence is that of Transcriptional repressor NrdR from Deinococcus radiodurans (strain ATCC 13939 / DSM 20539 / JCM 16871 / CCUG 27074 / LMG 4051 / NBRC 15346 / NCIMB 9279 / VKM B-1422 / R1).